The sequence spans 475 residues: MAKEHIVLFPFMSQGHIIPFLSLAKLISERHPTYTITLLNTPLNILNLQSTLPPNSNIHLKSLPYRSSDFGLPPDRENTDSLPFPLVLSFYQSGESLATHFTHFVSDLTRQNHDTPPLLIVADVFFGWTAEIAKRLNTHVSFSTCGAYGTAAYFSVWLHLPHAETDLPDFTAPGFPETFKLQRNQLSTYLKKADGSDRWSKFFQRQISLSLTSDAMICNTVEEMEAEGLRLLRKNTGLRVWSIGPLLPSLPPNSSLGRSGRKSGMEVSYIMKWLDSHPPGSVVYVSFGSIHDTAAQMTSLAVGLAVELATRSCGHSGRRFGGNRNRNSNPNGVPDEFEARMRGSGRGILIHGWAPQLEILEHESTGAFVSHCGWNSTLESLSRGVCMIGWPLAAEQFYNSKMVEEDWEWGGTCEGSGGGVRSEEVERLVRLVTEDEKGSDEENEQYDEMIGGYEEKGGEGSLSGQLIKFIGMESQ.

His-16 acts as the Proton acceptor in catalysis. His-16 contributes to the an anthocyanidin binding site. Catalysis depends on Asp-123, which acts as the Charge relay. Thr-144, Ala-354, Gln-356, His-371, Trp-374, Asn-375, Ser-376, and Glu-379 together coordinate UDP-alpha-D-glucose. Ala-394 contacts an anthocyanidin. Residues Glu-395 and Gln-396 each coordinate UDP-alpha-D-glucose.

It belongs to the UDP-glycosyltransferase family. As to expression, mainly expressed in stamens.

It carries out the reaction crocetin + UDP-alpha-D-glucose = beta-D-glucosyl crocetin + UDP. The catalysed reaction is beta-D-glucosyl crocetin + UDP-alpha-D-glucose = bis(beta-D-glucosyl) crocetin + UDP. The enzyme catalyses beta-D-gentiobiosyl crocetin + UDP-alpha-D-glucose = beta-D-gentiobiosyl beta-D-glucosyl crocetin + UDP. Its function is as follows. Crocetin glucosyltransferase involved in the synthesis of crocin, one of the apocarotenoids responsible for the color and bitter taste of saffron. In Crocus sativus (Saffron), this protein is Crocetin glucosyltransferase 3 (GLT3).